The chain runs to 550 residues: Sorting nexin-33 (550 aa).

The SH3 domain maps to 1–61 (MALKARALYS…PASYVEIQSS (61 aa)). The disordered stretch occupies residues 62-152 (RSGSVQVDYS…QDSIASGKRG (91 aa)). Residues 86–102 (YDDDDEEDDDDWDDWDD) are compositionally biased toward acidic residues. The segment covering 128–144 (SRPEYSHRPRPALERQD) has biased composition (basic and acidic residues). Residues 206 to 316 (FNCSVEEPTK…HFLGCQDEKQ (111 aa)) form the PX domain. The BAR domain maps to 347–550 (LQDVEERVDV…EKTLHLYDEL (204 aa)).

The protein belongs to the sorting nexin family.

The protein localises to the cytoplasm. It is found in the cytosol. It localises to the membrane. The protein resides in the cytoplasmic vesicle membrane. Its function is as follows. Plays a role in the reorganization of the cytoskeleton, endocytosis and cellular vesicle trafficking, both during interphase and at the end of mitotic cell divisions. Required for efficient progress through mitosis and cytokinesis. Required for normal formation of the cleavage furrow at the end of mitosis. Modulates endocytosis of cell-surface proteins. Promotes membrane tubulation (in vitro). May promote the formation of macropinosomes. This Xenopus laevis (African clawed frog) protein is Sorting nexin-33 (snx33).